A 100-amino-acid polypeptide reads, in one-letter code: MDLTPREKDKLQIFTAGLLAERRKARGLRLNYPEAVALITCAILEGARDGNTVAELMSEGRKVLTRADVMEGVPEMIPDIQVEATFPDGTKLVTVHNPIV.

The protein belongs to the urease gamma subunit family. As to quaternary structure, heterotrimer of UreA (gamma), UreB (beta) and UreC (alpha) subunits. Three heterotrimers associate to form the active enzyme.

Its subcellular location is the cytoplasm. It catalyses the reaction urea + 2 H2O + H(+) = hydrogencarbonate + 2 NH4(+). Its pathway is nitrogen metabolism; urea degradation; CO(2) and NH(3) from urea (urease route): step 1/1. The protein is Urease subunit gamma of Nitrosospira multiformis (strain ATCC 25196 / NCIMB 11849 / C 71).